The following is a 394-amino-acid chain: Elongation factor Tu (394 aa).

The region spanning 10–204 (KEHANIGTIG…AVDDYIPTPE (195 aa)) is the tr-type G domain. The segment at 19 to 26 (GHVDHGKT) is G1. 19–26 (GHVDHGKT) provides a ligand contact to GTP. Thr-26 contributes to the Mg(2+) binding site. The G2 stretch occupies residues 60 to 64 (GITIN). The G3 stretch occupies residues 81-84 (DCPG). GTP-binding positions include 81-85 (DCPGH) and 136-139 (NKVD). Residues 136-139 (NKVD) are G4. The G5 stretch occupies residues 174–176 (SAL).

This sequence belongs to the TRAFAC class translation factor GTPase superfamily. Classic translation factor GTPase family. EF-Tu/EF-1A subfamily. In terms of assembly, monomer.

It is found in the cytoplasm. It catalyses the reaction GTP + H2O = GDP + phosphate + H(+). Functionally, GTP hydrolase that promotes the GTP-dependent binding of aminoacyl-tRNA to the A-site of ribosomes during protein biosynthesis. This chain is Elongation factor Tu, found in Staphylococcus haemolyticus (strain JCSC1435).